The sequence spans 69 residues: Proteinase inhibitor (69 aa).

Serine 1 is modified (N-acetylserine). Cysteine 4 and cysteine 49 are disulfide-bonded.

In vitro, strong inhibitor of bovine beta-trypsin, weak inhibitor of alpha-chymotrypsin, subtilisin BPN', subtilisin Carlsberg and cathepsin G. This is Proteinase inhibitor from Linum usitatissimum (Flax).